A 396-amino-acid chain; its full sequence is MTAVQRITVLGATGSIGLSTLDVIARHPERYQVYALSGYTRIDQLLALCVLHCPAYAVVPNGEAAVRLREGLAAAGCATEVLEGEAGLCEVAAAPEVDAVMAAIVGAAGLRPTLAAVEAGKKVLLANKEALVMSGALFMEAVRRSGAVLLPIDSEHNAIFQCLPGDYDRGLSQVGVRRILLTASGGPFRETPQADLADVTPEQACAHPNWSMGRKISVDSASMMNKGLELIEACWLFDAAPDKVEVVVHPQSVIHSLVDYVDGSVLAQLGNPDMRTPIANALAWPERIDSGVAPLDLFAIARLDFQAPDELRFPCLRLARQAAEAGNSAPAVLNAANEVAVEAFLERRIRFPEIAGMIEQVLAQEPVVPVPSLDAVFAADQRARELSREWLRRHGR.

Residues Thr13, Gly14, Ser15, Ile16, and Asn127 each coordinate NADPH. Residue Lys128 participates in 1-deoxy-D-xylulose 5-phosphate binding. Glu129 contributes to the NADPH binding site. Asp153 contacts Mn(2+). The 1-deoxy-D-xylulose 5-phosphate site is built by Ser154, Glu155, Ser184, and His207. Residue Glu155 coordinates Mn(2+). An NADPH-binding site is contributed by Gly213. Residues Ser220, Asn225, Lys226, and Glu229 each contribute to the 1-deoxy-D-xylulose 5-phosphate site. Glu229 serves as a coordination point for Mn(2+).

This sequence belongs to the DXR family. Mg(2+) serves as cofactor. Mn(2+) is required as a cofactor.

The enzyme catalyses 2-C-methyl-D-erythritol 4-phosphate + NADP(+) = 1-deoxy-D-xylulose 5-phosphate + NADPH + H(+). The protein operates within isoprenoid biosynthesis; isopentenyl diphosphate biosynthesis via DXP pathway; isopentenyl diphosphate from 1-deoxy-D-xylulose 5-phosphate: step 1/6. In terms of biological role, catalyzes the NADPH-dependent rearrangement and reduction of 1-deoxy-D-xylulose-5-phosphate (DXP) to 2-C-methyl-D-erythritol 4-phosphate (MEP). This is 1-deoxy-D-xylulose 5-phosphate reductoisomerase from Pseudomonas putida (strain W619).